The following is a 354-amino-acid chain: Cellular communication network factor 6 (354 aa).

The N-terminal stretch at 1 to 23 (MRRLLFCTLLMTGLTQLCCRTQG) is a signal peptide. One can recognise an IGFBP N-terminal domain in the interval 44–117 (RTEVCRWPCR…RYETGVCAYL (74 aa)). Disulfide bonds link C48/C72, C52/C74, C54/C75, C61/C78, C86/C100, C92/C114, C209/C238, C219/C223, C247/C252, C268/C305, C285/C319, C296/C335, and C299/C337. Positions 208 to 253 (KCLVQATKWTPCSRTCGMGISNRVTNDNANCEMRKERRLCYIQPCS) constitute a TSP type-1 domain. The region spanning 268–342 (CQPTFQLPKA…TSCVCQRDCR (75 aa)) is the CTCK domain. N-linked (GlcNAc...) asparagine glycosylation is present at N308.

The protein belongs to the CCN family.

Its subcellular location is the secreted. The protein resides in the mitochondrion. Plays a role in mitochondrial electron transport and mitochondrial respiration. This is Cellular communication network factor 6 from Mus musculus (Mouse).